Here is a 138-residue protein sequence, read N- to C-terminus: ATP synthase epsilon chain (138 aa).

It belongs to the ATPase epsilon chain family. F-type ATPases have 2 components, CF(1) - the catalytic core - and CF(0) - the membrane proton channel. CF(1) has five subunits: alpha(3), beta(3), gamma(1), delta(1), epsilon(1). CF(0) has three main subunits: a, b and c.

Its subcellular location is the cell membrane. Produces ATP from ADP in the presence of a proton gradient across the membrane. The protein is ATP synthase epsilon chain (atpC) of Buchnera aphidicola subsp. Acyrthosiphon pisum (strain APS) (Acyrthosiphon pisum symbiotic bacterium).